Consider the following 728-residue polypeptide: Double-strand break repair protein mre-11 (728 aa).

Acidic residues predominate over residues 1 to 12 (MCGSDDSFDDFV). The tract at residues 1 to 45 (MCGSDDSFDDFVPDSQEPASSRTRNQDHLDDDEVPCSQRPDAAND) is disordered. Residues aspartate 73, histidine 75, aspartate 113, and asparagine 181 each coordinate Mn(2+). Histidine 182 serves as the catalytic Proton donor. The Mn(2+) site is built by histidine 269, histidine 301, and histidine 303. A disordered region spans residues 601–728 (KNPVADVEME…PSKKRDLSFF (128 aa)). Residues 607–616 (VEMEEDEDDP) are compositionally biased toward acidic residues. The span at 622 to 632 (PQSTSRTNYAS) shows a compositional bias: polar residues. A compositionally biased stretch (acidic residues) spans 634 to 645 (SEDEVANSDEEM).

This sequence belongs to the MRE11/RAD32 family. As to quaternary structure, component of the MRN complex composed of two heterodimers rad-50 and mre-11 associated with a single nbs-1. The cofactor is Mn(2+).

Its subcellular location is the nucleus. The protein resides in the chromosome. Core component of the MRN complex, which plays a central role in double-strand break (DSB) repair, DNA recombination, maintenance of telomere integrity and meiosis. The MRN complex is involved in the repair of DNA double-strand breaks (DSBs) via homologous recombination (HR), an error-free mechanism which primarily occurs during S and G2 phases. The complex (1) mediates the end resection of damaged DNA, which generates proper single-stranded DNA, a key initial steps in HR, and is (2) required for the recruitment of other repair factors and efficient activation of ATM and ATR upon DNA damage. Within the MRN complex, mre-11 possesses both single-strand endonuclease activity and double-strand-specific 3'-5' exonuclease activity. Mre-11 first endonucleolytically cleaves the 5' strand at DNA DSB ends to prevent non-homologous end joining (NHEJ) and licence HR. It then generates a single-stranded DNA gap via 3' to 5' exonucleolytic degradation, which is required for single-strand invasion and recombination. Required for meiotic crossing over and chiasma formation. Pachytene morphology and homolog pairing are normal. Vital in long term for maintenance of reproductive capacity of subsequent generations. This Caenorhabditis elegans protein is Double-strand break repair protein mre-11.